The sequence spans 191 residues: Accessory gene regulator protein B (191 aa).

The next 5 helical transmembrane spans lie at 45–65, 81–101, 108–128, 144–164, and 165–185; these read IVVY…TVHL, STFA…WILI, IFMI…SPAI, ITAI…KQPF, and NELV…IFFP.

Belongs to the AgrB family.

It localises to the cell membrane. In terms of biological role, essential for the production of a quorum sensing system signal molecule, the autoinducing peptide (AIP). This quorum sensing system is responsible for the regulation of the expression of virulence factor genes. Involved in the proteolytic processing of AgrD, the precursor of AIP. The polypeptide is Accessory gene regulator protein B (Staphylococcus carnosus (strain TM300)).